We begin with the raw amino-acid sequence, 238 residues long: MDLKLPPTNPTNPQQAKTFMKSIEEDEKNKAEDLDIIKKEDIDEPKQEDTTDGNGGGGIGIVPTLQNIVATVNLDCRLDLKTIALHARNAEYNPKRFAAVIMRIRDPKTTALIFASGKMVVTGAKSEDDSKLASRKYARIIQKLGFNAKFCDFKIQNIVGSTDVKFAIRLEGLAFAHGTFSSYEPELFPGLIYRMVKPKIVLLIFVSGKIVLTGAKKREEIYDAFESIYPVLNEFRKN.

Positions 1–58 are disordered; that stretch reads MDLKLPPTNPTNPQQAKTFMKSIEEDEKNKAEDLDIIKKEDIDEPKQEDTTDGNGGGG. The span at 27–49 shows a compositional bias: basic and acidic residues; the sequence is EKNKAEDLDIIKKEDIDEPKQED. 2 consecutive repeat copies span residues 65 to 141 and 155 to 232.

It belongs to the TBP family. As to quaternary structure, belongs to the TFIID complex together with the TBP-associated factors (TAFs). Binds DNA as monomer.

Its subcellular location is the nucleus. General transcription factor that functions at the core of the DNA-binding multiprotein factor TFIID. Binding of TFIID to the TATA box is the initial transcriptional step of the pre-initiation complex (PIC), playing a role in the activation of eukaryotic genes transcribed by RNA polymerase II. This Candida albicans (strain SC5314 / ATCC MYA-2876) (Yeast) protein is TATA-box-binding protein (TBP1).